A 411-amino-acid chain; its full sequence is Tyrosine--tRNA ligase (411 aa).

The 'HIGH' region signature appears at Pro50 to His59. Positions Lys236–Ser240 match the 'KMSKS' region motif. Lys239 contributes to the ATP binding site. The region spanning Val345–Leu409 is the S4 RNA-binding domain.

The protein belongs to the class-I aminoacyl-tRNA synthetase family. TyrS type 2 subfamily. Homodimer.

It localises to the cytoplasm. The enzyme catalyses tRNA(Tyr) + L-tyrosine + ATP = L-tyrosyl-tRNA(Tyr) + AMP + diphosphate + H(+). Catalyzes the attachment of tyrosine to tRNA(Tyr) in a two-step reaction: tyrosine is first activated by ATP to form Tyr-AMP and then transferred to the acceptor end of tRNA(Tyr). This chain is Tyrosine--tRNA ligase, found in Deinococcus radiodurans (strain ATCC 13939 / DSM 20539 / JCM 16871 / CCUG 27074 / LMG 4051 / NBRC 15346 / NCIMB 9279 / VKM B-1422 / R1).